Consider the following 672-residue polypeptide: Leucine-rich repeat receptor-like protein kinase PXC1 (672 aa).

A signal peptide spans 1-21 (MAAKPLLLPLLLLLHLSITLA). The Extracellular segment spans residues 22–269 (QNDTNALTLF…IHSHRGIKPG (248 aa)). Residues asparagine 23, asparagine 44, and asparagine 101 are each glycosylated (N-linked (GlcNAc...) asparagine). An LRR 1 repeat occupies 87-110 (LDQLRLLDLHDNRLNGTVSPLTNC). Residue lysine 111 forms a Glycyl lysine isopeptide (Lys-Gly) (interchain with G-Cter in ubiquitin) linkage. LRR repeat units lie at residues 112 to 134 (NLRL…ISFL), 135 to 158 (KRMI…ILGF), 160 to 181 (RVLT…FSQM), and 182 to 205 (KSLL…VVKK). 2 N-linked (GlcNAc...) asparagine glycosylation sites follow: asparagine 188 and asparagine 197. The segment covering 233–249 (ESSNTDQIVPSNPTSIP) has biased composition (polar residues). Residues 233 to 254 (ESSNTDQIVPSNPTSIPHSPVS) are disordered. Residues 270 to 290 (IIAAVIGGCVAVIVLVSFGFA) form a helical membrane-spanning segment. Residues 291–672 (FCCGRLDRNG…MSPSLATTDG (382 aa)) lie on the Cytoplasmic side of the membrane. Residues 300–333 (GERSKSGSVETGFVGGGEGKRRSSYGEGGESDAT) are disordered. The region spanning 357 to 645 (KASAEMLGKG…AEVVKMVEEI (289 aa)) is the Protein kinase domain. Residues 363-371 (LGKGSLGTV) and lysine 386 contribute to the ATP site. Residues 650 to 672 (SPVGEDFDESRNSMSPSLATTDG) form a disordered region. The segment covering 661–672 (NSMSPSLATTDG) has biased composition (polar residues).

It belongs to the protein kinase superfamily. Ser/Thr protein kinase family. Expressed in the vascular strands of cotyledons, the shoot apex, hypocotyls, roots, leaves, stems and flowers.

The protein localises to the cell membrane. In terms of biological role, leucine-rich repeat receptor-like protein kinase involved in secondary cell wall formation in xylem fibers. May play a role in a regulatory network which also incorporates the TDR/PXY signaling pathway and regulates the maturation of interfascicular fiber cells. May promote the initiation of secondary cell wall deposition during the procedure of cell expansion. This chain is Leucine-rich repeat receptor-like protein kinase PXC1, found in Arabidopsis thaliana (Mouse-ear cress).